The chain runs to 818 residues: Glycerol-3-phosphate acyltransferase (818 aa).

Positions 305–310 (CHRSHM) match the HXXXXD motif motif.

It belongs to the GPAT/DAPAT family.

The protein localises to the cell inner membrane. It carries out the reaction sn-glycerol 3-phosphate + an acyl-CoA = a 1-acyl-sn-glycero-3-phosphate + CoA. Its pathway is phospholipid metabolism; CDP-diacylglycerol biosynthesis; CDP-diacylglycerol from sn-glycerol 3-phosphate: step 1/3. The sequence is that of Glycerol-3-phosphate acyltransferase from Edwardsiella ictaluri (strain 93-146).